The following is a 298-amino-acid chain: Cell wall protein DAN1 (298 aa).

Residues 1-19 form the signal peptide; the sequence is MSRISILAVAAALVASATA. Positions 122–168 are disordered; it reads PASTTEASSTSTSEASSAATESSSSSESSAETSSNAASTQATVSSES. Residue Asn275 is the site of GPI-anchor amidated asparagine attachment. Residues 276–298 constitute a propeptide, removed in mature form; the sequence is GANKFNNGVFGAAAIAGAAALLL.

This sequence belongs to the SRP1/TIP1 family. Extensively O-glycosylated. Post-translationally, the GPI-anchor is attached to the protein in the endoplasmic reticulum and serves to target the protein to the cell surface. There, the glucosamine-inositol phospholipid moiety is cleaved off and the GPI-modified mannoprotein is covalently attached via its lipidless GPI glycan remnant to the 1,6-beta-glucan of the outer cell wall layer.

It is found in the secreted. The protein resides in the cell wall. It localises to the membrane. In terms of biological role, component of the cell wall. The polypeptide is Cell wall protein DAN1 (DAN1) (Saccharomyces cerevisiae (strain ATCC 204508 / S288c) (Baker's yeast)).